The chain runs to 364 residues: tRNA-specific 2-thiouridylase MnmA (364 aa).

ATP contacts are provided by residues 12–19 (GISGGVDS) and methionine 38. An interaction with target base in tRNA region spans residues 98–100 (NPD). Cysteine 103 serves as the catalytic Nucleophile. An intrachain disulfide couples cysteine 103 to cysteine 199. Residue glycine 127 coordinates ATP. An interaction with tRNA region spans residues 149 to 151 (KEQ). Residue cysteine 199 is the Cysteine persulfide intermediate of the active site. The segment at 311 to 312 (RY) is interaction with tRNA.

The protein belongs to the MnmA/TRMU family.

Its subcellular location is the cytoplasm. It catalyses the reaction S-sulfanyl-L-cysteinyl-[protein] + uridine(34) in tRNA + AH2 + ATP = 2-thiouridine(34) in tRNA + L-cysteinyl-[protein] + A + AMP + diphosphate + H(+). Its function is as follows. Catalyzes the 2-thiolation of uridine at the wobble position (U34) of tRNA, leading to the formation of s(2)U34. The chain is tRNA-specific 2-thiouridylase MnmA from Hahella chejuensis (strain KCTC 2396).